The chain runs to 541 residues: 2-hydroxyacylsphingosine 1-beta-galactosyltransferase (541 aa).

A signal peptide spans 1–20 (MKSYTPYFILLWSAVGIAKA). N-linked (GlcNAc...) asparagine glycosylation is found at Asn-78, Asn-333, and Asn-442. A helical membrane pass occupies residues 472–492 (YFLLDIAFVLLLGAALLYFLL).

Belongs to the UDP-glycosyltransferase family.

It localises to the membrane. The protein resides in the endoplasmic reticulum. It carries out the reaction an N-acylsphing-4-enine + UDP-alpha-D-galactose = a beta-D-galactosyl-(1&lt;-&gt;1')-N-acylsphing-4-enine + UDP + H(+). The enzyme catalyses an N-acyl-sphingoid base + UDP-alpha-D-galactose = a D-galactosylceramide + UDP + H(+). The catalysed reaction is N-(2-hydroxy-hexanoyl)-sphing-4-enine + UDP-alpha-D-galactose = N-(2-hydroxy-hexanoyl)-beta-D-galactosyl-sphing-4-enine + UDP + H(+). It catalyses the reaction N-(2-hydroxy-hexanoyl)-sphinganine + UDP-alpha-D-galactose = N-(2-hydroxyhexanoyl)-beta-D-galactosylsphinganine + UDP + H(+). Its pathway is sphingolipid metabolism; galactosylceramide biosynthesis. Its function is as follows. Catalyzes the transfer of galactose to ceramide, a key enzymatic step in the biosynthesis of galactocerebrosides, which are abundant sphingolipids of the myelin membrane of the central nervous system and peripheral nervous system. Galactosylates both hydroxy- and non-hydroxy fatty acid-containing ceramides and diglycerides. This is 2-hydroxyacylsphingosine 1-beta-galactosyltransferase from Homo sapiens (Human).